Here is a 359-residue protein sequence, read N- to C-terminus: uncharacterized protein (359 aa).

46–53 (GPKSSGKS) is a binding site for ATP.

This sequence belongs to the archaeal ATPase family.

This is an uncharacterized protein from Methanocaldococcus jannaschii (strain ATCC 43067 / DSM 2661 / JAL-1 / JCM 10045 / NBRC 100440) (Methanococcus jannaschii).